The chain runs to 1369 residues: Rho-associated protein kinase 1 (1369 aa).

Ser-2 is subject to N-acetylserine. The region spanning Tyr-76–Phe-338 is the Protein kinase domain. Residues Ile-82 to Val-90 and Lys-105 each bind ATP. Asp-198 acts as the Proton acceptor in catalysis. Residues Asp-341–Ala-409 form the AGC-kinase C-terminal domain. Positions Phe-368–Arg-727 are interaction with FHOD1. Residues Lys-422–Lys-692 are a coiled coil. Residues Ser-479–Thr-556 form the REM-1 domain. An SHROOM3 binding region spans residues Glu-707–Asn-946. The region spanning Thr-949 to Phe-1015 is the RhoBD domain. An RHOA binding region spans residues Leu-998–Met-1010. The stretch at Asn-1011 to Ser-1102 forms a coiled coil. Residues Ser-1105 and Ser-1108 each carry the phosphoserine modification. Residues Asn-1115–Ser-1369 are auto-inhibitory. One can recognise a PH domain in the interval Ser-1133–Pro-1332. The Phorbol-ester/DAG-type zinc-finger motif lies at Gly-1243–Cys-1298. Position 1343 is a phosphoserine (Ser-1343).

The protein belongs to the protein kinase superfamily. AGC Ser/Thr protein kinase family. As to quaternary structure, homodimer. Interacts with GEM, MYLC2B, RHOE, LIMK1, LIMK2, TSG101, CHORDC1, DAPK3, PFN1, PTEN and JIP3. Interacts with FHOD1 in a Src-dependent manner. Interacts with ITGB1BP1 (via N-terminus and PTB domain). Interacts with RHOA (activated by GTP), RHOB, RHOC and PPP1R12A. Interacts with SHROOM3. The cofactor is Mg(2+). In terms of processing, autophosphorylated on serine and threonine residues. Post-translationally, cleaved by caspase-3 during apoptosis. This leads to constitutive activation of the kinase and membrane blebbing. In terms of tissue distribution, highly expressed in brain, spleen, lung, liver, skeletal muscle, kidney and testis.

Its subcellular location is the cytoplasm. It localises to the cytoskeleton. The protein resides in the microtubule organizing center. It is found in the centrosome. The protein localises to the centriole. Its subcellular location is the golgi apparatus membrane. It localises to the cell projection. The protein resides in the bleb. It is found in the cell membrane. The protein localises to the lamellipodium. Its subcellular location is the ruffle. It catalyses the reaction L-seryl-[protein] + ATP = O-phospho-L-seryl-[protein] + ADP + H(+). It carries out the reaction L-threonyl-[protein] + ATP = O-phospho-L-threonyl-[protein] + ADP + H(+). With respect to regulation, activated by RHOA binding. Inhibited by Y-27632. Its function is as follows. Protein kinase which is a key regulator of the actin cytoskeleton and cell polarity. Involved in regulation of smooth muscle contraction, actin cytoskeleton organization, stress fiber and focal adhesion formation, neurite retraction, cell adhesion and motility via phosphorylation of DAPK3, GFAP, LIMK1, LIMK2, MYL9/MLC2, TPPP, PFN1 and PPP1R12A. Phosphorylates FHOD1 and acts synergistically with it to promote SRC-dependent non-apoptotic plasma membrane blebbing. Phosphorylates JIP3 and regulates the recruitment of JNK to JIP3 upon UVB-induced stress. Acts as a suppressor of inflammatory cell migration by regulating PTEN phosphorylation and stability. Acts as a negative regulator of VEGF-induced angiogenic endothelial cell activation. Required for centrosome positioning and centrosome-dependent exit from mitosis. Plays a role in terminal erythroid differentiation. Inhibits podocyte motility via regulation of actin cytoskeletal dynamics and phosphorylation of CFL1. Promotes keratinocyte terminal differentiation. Involved in osteoblast compaction through the fibronectin fibrillogenesis cell-mediated matrix assembly process, essential for osteoblast mineralization. May regulate closure of the eyelids and ventral body wall by inducing the assembly of actomyosin bundles. This chain is Rho-associated protein kinase 1 (Rock1), found in Rattus norvegicus (Rat).